We begin with the raw amino-acid sequence, 226 residues long: Triosephosphate isomerase (226 aa).

13–15 (NFK) is a binding site for substrate. The active-site Electrophile is His-97. Residue Glu-145 is the Proton acceptor of the active site. Residues Ile-150, Gly-185, and 206 to 207 (AS) each bind substrate.

It belongs to the triosephosphate isomerase family. In terms of assembly, homotetramer; dimer of dimers.

It is found in the cytoplasm. It carries out the reaction D-glyceraldehyde 3-phosphate = dihydroxyacetone phosphate. It functions in the pathway carbohydrate biosynthesis; gluconeogenesis. It participates in carbohydrate degradation; glycolysis; D-glyceraldehyde 3-phosphate from glycerone phosphate: step 1/1. Its function is as follows. Involved in the gluconeogenesis. Catalyzes stereospecifically the conversion of dihydroxyacetone phosphate (DHAP) to D-glyceraldehyde-3-phosphate (G3P). In Methanobacterium bryantii, this protein is Triosephosphate isomerase.